A 1076-amino-acid chain; its full sequence is Ribosome quality control complex subunit NEMF (1076 aa).

At threonine 7 the chain carries Phosphothreonine. Residues 296–359 (VDEFYSKIEG…LIEMNLQIVD (64 aa)) adopt a coiled-coil conformation. At serine 417 the chain carries Phosphoserine. A disordered region spans residues 420–453 (EDDDVDGDVNVEKNETEPPKGKKKKQKNKQLQKP). Positions 429–439 (NVEKNETEPPK) are enriched in basic and acidic residues. A compositionally biased stretch (basic residues) spans 440–449 (GKKKKQKNKQ). A coiled-coil region spans residues 483–514 (AAKKTQKTVEAAEKAFKSAEKKTKQTLKEVQT). 2 stretches are compositionally biased toward acidic residues: residues 691–710 (ISEEMEQLDGGDTSSDEDKE) and 742–754 (LIQEESSEDEGEY). Disordered stretches follow at residues 691–715 (ISEEMEQLDGGDTSSDEDKEEHETP) and 742–972 (LIQE…DLDQ). Serine 747, serine 748, and serine 763 each carry phosphoserine. Basic and acidic residues predominate over residues 755-768 (EEVRKDQDSVGEMK). The segment covering 777–795 (YPDTTIDLSHLQPQRSIQK) has biased composition (polar residues). Serine 831 is subject to Phosphoserine. Residues 839-854 (LEGKDKEKESTVHIET) are compositionally biased toward basic and acidic residues. Positions 869 to 894 (KRGQKSKMKKMKEKYKDQDEEDRELI) form a coiled coil. Positions 870-881 (RGQKSKMKKMKE) are enriched in basic residues. Residues 937-965 (DNIKKETPFLEVITHELQDFAVDDPHDDK) show a composition bias toward basic and acidic residues.

This sequence belongs to the NEMF family. In terms of assembly, component of the ribosome quality control complex (RQC), composed of the E3 ubiquitin ligase LTN1, TCF25 and NEMF associated with the 60S ribosomal subunit. The complex probably also contains VCP/p97 and its ubiquitin-binding cofactors. Interacts (via its N-terminus) with XPO1. In terms of tissue distribution, expressed in brain, heart, liver, lung, spleen, and skeletal muscle. Also expressed at lower levels in stomach and testis.

Its subcellular location is the cytoplasm. The protein resides in the cytosol. It localises to the nucleus. Key component of the ribosome quality control complex (RQC), a ribosome-associated complex that mediates the extraction of incompletely synthesized nascent chains from stalled ribosomes as well as their ubiquitin-mediated proteasomal degradation. Thereby, frees 60S subunit ribosomes from the stalled translation complex and prevents the accumulation of nascent polypeptide chains that are potentially toxic for the cell. Within the RQC complex, NEMF specifically binds stalled 60S ribosomal subunits by recognizing an exposed, nascent chain-conjugated tRNA moiety and promotes the recruitment of LTN1 to stalled 60S subunits. Following binding to stalled 60S ribosomal subunits, NEMF mediates CAT tailing by recruiting alanine-charged tRNA to the A-site and directing the elongation of stalled nascent chains independently of mRNA or 40S subunits, leading to non-templated C-terminal alanine extensions (CAT tails). Mainly recruits alanine-charged tRNAs, but can also other amino acid-charged tRNAs. CAT tailing is required to promote ubiquitination of stalled nascent chains by different E3 ubiquitin-protein ligases. In the canonical RQC pathway (RQC-L), CAT tailing facilitates LTN1-dependent ubiquitination by exposing lysine residues that would otherwise remain buried in the ribosomal exit tunnel. In the alternative RQC pathway (RQC-C) CAT tailing creates an C-degron mainly composed of alanine that is recognized by the CRL2(KLHDC10) and RCHY1/PIRH2 E3 ligases, leading to ubiquitination and degradation of stalled nascent chains. NEMF may also indirectly play a role in nuclear export. This is Ribosome quality control complex subunit NEMF from Homo sapiens (Human).